We begin with the raw amino-acid sequence, 336 residues long: Glyceraldehyde-3-phosphate dehydrogenase (336 aa).

Residues 12-13 (RI), aspartate 34, arginine 78, and threonine 121 each bind NAD(+). Residues 151 to 153 (SCT), threonine 182, arginine 199, 212 to 213 (TG), and arginine 235 contribute to the D-glyceraldehyde 3-phosphate site. Cysteine 152 acts as the Nucleophile in catalysis. Asparagine 316 contacts NAD(+).

It belongs to the glyceraldehyde-3-phosphate dehydrogenase family. As to quaternary structure, homotetramer.

The protein localises to the cytoplasm. It catalyses the reaction D-glyceraldehyde 3-phosphate + phosphate + NAD(+) = (2R)-3-phospho-glyceroyl phosphate + NADH + H(+). The protein operates within carbohydrate degradation; glycolysis; pyruvate from D-glyceraldehyde 3-phosphate: step 1/5. Functionally, catalyzes the oxidative phosphorylation of glyceraldehyde 3-phosphate (G3P) to 1,3-bisphosphoglycerate (BPG) using the cofactor NAD. The first reaction step involves the formation of a hemiacetal intermediate between G3P and a cysteine residue, and this hemiacetal intermediate is then oxidized to a thioester, with concomitant reduction of NAD to NADH. The reduced NADH is then exchanged with the second NAD, and the thioester is attacked by a nucleophilic inorganic phosphate to produce BPG. This Streptococcus dysgalactiae subsp. equisimilis (Streptococcus equisimilis) protein is Glyceraldehyde-3-phosphate dehydrogenase (gap).